Reading from the N-terminus, the 465-residue chain is Kynureninase (465 aa).

Residues leucine 133, threonine 134, 161 to 164 (FPSD), serine 217, aspartate 246, histidine 249, and tyrosine 271 each bind pyridoxal 5'-phosphate. Lysine 272 carries the N6-(pyridoxal phosphate)lysine modification. Pyridoxal 5'-phosphate contacts are provided by tryptophan 302 and asparagine 330.

It belongs to the kynureninase family. Homodimer. Pyridoxal 5'-phosphate serves as cofactor.

It is found in the cytoplasm. It catalyses the reaction L-kynurenine + H2O = anthranilate + L-alanine + H(+). The enzyme catalyses 3-hydroxy-L-kynurenine + H2O = 3-hydroxyanthranilate + L-alanine + H(+). It functions in the pathway amino-acid degradation; L-kynurenine degradation; L-alanine and anthranilate from L-kynurenine: step 1/1. The protein operates within cofactor biosynthesis; NAD(+) biosynthesis; quinolinate from L-kynurenine: step 2/3. Functionally, catalyzes the cleavage of L-kynurenine (L-Kyn) and L-3-hydroxykynurenine (L-3OHKyn) into anthranilic acid (AA) and 3-hydroxyanthranilic acid (3-OHAA), respectively. This is Kynureninase from Nematostella vectensis (Starlet sea anemone).